We begin with the raw amino-acid sequence, 523 residues long: Siroheme synthase (523 aa).

Residues 1–203 (MNTFPLFFKL…GNENEAIAQL (203 aa)) form a precorrin-2 dehydrogenase /sirohydrochlorin ferrochelatase region. NAD(+) is bound by residues 22–23 (DV) and 43–44 (PS). Ser128 is subject to Phosphoserine. Residues 231 to 523 (GEVYIVGAGP…DGGLEQLVID (293 aa)) form a uroporphyrinogen-III C-methyltransferase region. Residue Pro240 coordinates S-adenosyl-L-methionine. The active-site Proton acceptor is the Asp263. The active-site Proton donor is the Lys285. Residues 316–318 (GGD), Ile321, 346–347 (TA), Met398, and Ala427 contribute to the S-adenosyl-L-methionine site.

The protein in the N-terminal section; belongs to the precorrin-2 dehydrogenase / sirohydrochlorin ferrochelatase family. In the C-terminal section; belongs to the precorrin methyltransferase family.

The enzyme catalyses uroporphyrinogen III + 2 S-adenosyl-L-methionine = precorrin-2 + 2 S-adenosyl-L-homocysteine + H(+). The catalysed reaction is precorrin-2 + NAD(+) = sirohydrochlorin + NADH + 2 H(+). It carries out the reaction siroheme + 2 H(+) = sirohydrochlorin + Fe(2+). It functions in the pathway cofactor biosynthesis; adenosylcobalamin biosynthesis; precorrin-2 from uroporphyrinogen III: step 1/1. It participates in cofactor biosynthesis; adenosylcobalamin biosynthesis; sirohydrochlorin from precorrin-2: step 1/1. Its pathway is porphyrin-containing compound metabolism; siroheme biosynthesis; precorrin-2 from uroporphyrinogen III: step 1/1. The protein operates within porphyrin-containing compound metabolism; siroheme biosynthesis; siroheme from sirohydrochlorin: step 1/1. It functions in the pathway porphyrin-containing compound metabolism; siroheme biosynthesis; sirohydrochlorin from precorrin-2: step 1/1. In terms of biological role, multifunctional enzyme that catalyzes the SAM-dependent methylations of uroporphyrinogen III at position C-2 and C-7 to form precorrin-2 via precorrin-1. Then it catalyzes the NAD-dependent ring dehydrogenation of precorrin-2 to yield sirohydrochlorin. Finally, it catalyzes the ferrochelation of sirohydrochlorin to yield siroheme. The chain is Siroheme synthase from Psychrobacter cryohalolentis (strain ATCC BAA-1226 / DSM 17306 / VKM B-2378 / K5).